The primary structure comprises 2572 residues: Zinc finger homeobox protein 2 (2572 aa).

2 disordered regions span residues 1 to 107 and 343 to 425; these read MATL…GLPP and LSPP…ADDY. A compositionally biased stretch (low complexity) spans 8–36; it reads STTGTTPSPGHNAPSLPSDTFSSSTPSDP. Composition is skewed to polar residues over residues 44–53 and 389–398; these read ASSTSENMRS and LNQSSPTSKE. 2 C2H2-type zinc fingers span residues 453–476 and 508–532; these read LKCP…REKH and YRCD…SDKH. Disordered regions lie at residues 537-566, 608-655, and 675-710; these read QGFQ…PKTK, LPPG…LRPD, and RKFP…SPPP. Positions 615–628 are enriched in pro residues; it reads PGPPPPPGATPTSP. Positions 696-705 are enriched in low complexity; sequence LLGSSSDSLP. 2 consecutive C2H2-type zinc fingers follow at residues 821-845 and 870-894; these read LRCN…GAAH and YHCL…TPAH. Positions 929–974 are disordered; sequence QLRTPGKAPVTPLAEPPTPEKDAQNKTEQLASEETENKTGPSRDSA. Polar residues predominate over residues 954–974; the sequence is KTEQLASEETENKTGPSRDSA. A C2H2-type 5 zinc finger spans residues 1009-1032; the sequence is YRCPLCQEQLVGRPALHFHLSHLH. The tract at residues 1061-1171 is disordered; it reads PTLSPLDNGQ…PAPADSRHPL (111 aa). Residues 1120–1132 show a composition bias toward pro residues; that stretch reads GQPPSPAPSPVPE. C2H2-type zinc fingers lie at residues 1191-1217 and 1248-1272; these read YKCT…SHLH and FKCT…SVLH. Disordered stretches follow at residues 1269–1325, 1389–1408, and 1415–1434; these read SVLH…FLSP, LPAA…LAER, and MAKE…LPNE. The segment covering 1279 to 1311 has biased composition (basic and acidic residues); it reads TKTDSKIEGPERSQEEPKEGETEGEVGTEKKGP. The span at 1392–1401 shows a compositional bias: pro residues; that stretch reads ATPPPPPQPP. A C2H2-type 8 zinc finger spans residues 1480-1503; it reads LACGACGKLFSNMLILKTHEEHVH. Residues 1528–1591 are disordered; the sequence is PPLAEPPKPP…SSRGNLPPLV (64 aa). Positions 1595–1654 form a DNA-binding region, homeobox 1; sequence RRFSRTKFTEFQTQALQSFFETSAYPKDGEVERLASLLGLASRVVVVWFQNARQKARKNA. A C2H2-type 9; degenerate zinc finger spans residues 1670–1696; the sequence is SGCRRCHATFSCVFELVRHLKKCYDDQ. The segment covering 1696–1724 has biased composition (acidic residues); the sequence is QTLEEEEEEAERGEEEEEVEEEEVEEEQG. Disordered regions lie at residues 1696–1769, 1820–1860, 1912–2065, 2268–2327, and 2398–2431; these read QTLE…SPAH, AATS…DKRL, ERKG…GMGQ, VQTA…NDAL, and NALL…EAGE. A compositionally biased stretch (pro residues) spans 1728-1738; sequence PAGPEGPLPEP. A C2H2-type 10 zinc finger spans residues 1769 to 1791; that stretch reads HTCDQCAISFSSQDLLTSHRRLH. A DNA-binding region (homeobox 2) is located at residues 1857–1916; sequence DKRLRTTILPEQLEILYRWYMQDSNPTRKMLDCISEEVGLKKRVVQVWFQNTRARERKGQ. Positions 1925–1939 are enriched in low complexity; that stretch reads PSPAVKPPATATPAS. Residues 1949–1963 show a composition bias toward basic and acidic residues; sequence KVDDGTGREAPKREA. Residues 1991-2004 are compositionally biased toward pro residues; it reads TPEPPLPLLPPPPP. Positions 2017–2044 are enriched in low complexity; sequence SPESEACSLSAGDLSDSSASSLAEPESP. The span at 2045–2061 shows a compositional bias: gly residues; the sequence is GAGGTSGGPGGGTGVPD. A DNA-binding region (homeobox 3) is located at residues 2065 to 2124; it reads QRRYRTQMSSLQLKIMKACYEAYRTPTMQECEVLGEEIGLPKRVIQVWFQNARAKEKKAK. Over residues 2284–2293 the composition is skewed to polar residues; the sequence is DQTNTSTAGT. The span at 2305–2315 shows a compositional bias: basic and acidic residues; sequence LGDKVSSERKP. A compositionally biased stretch (pro residues) spans 2402–2422; sequence QPPPQPPEPTATAPPKPPELP. The segment at 2451 to 2471 adopts a C2H2-type 11; degenerate zinc-finger fold; it reads YLCRQCKMAFDGEAPATAHQR. The C2H2-type 12 zinc finger occupies 2495-2519; the sequence is YHCLACEVLLSGREALASHLRSSAH. The tract at residues 2551–2572 is disordered; sequence EARLPHTDSNPKTTTTSTLLAL. Positions 2563–2572 are enriched in low complexity; it reads TTTTSTLLAL.

The protein localises to the nucleus. Transcriptional regulator that is critical for the regulation of pain perception and processing of noxious stimuli. In Homo sapiens (Human), this protein is Zinc finger homeobox protein 2 (ZFHX2).